The chain runs to 491 residues: Cell division control protein 1 (491 aa).

The segment at Met1 to Lys33 is disordered. Over Met1 to Arg39 the chain is Cytoplasmic. Residues Tyr24–Lys33 are compositionally biased toward basic residues. A helical membrane pass occupies residues Leu40–Tyr60. Residues Tyr61–Ala391 are Extracellular-facing. A divalent metal cation is bound by residues Asp95, Asp144, Asn183, and His323. A helical membrane pass occupies residues Ile392 to Phe412. Residues Pro413–Ser465 are Cytoplasmic-facing. The helical transmembrane segment at Ile466–Tyr486 threads the bilayer. The Extracellular portion of the chain corresponds to Phe487 to Val491.

This sequence belongs to the metallophosphoesterase superfamily. MPPE1 family. It depends on a divalent metal cation as a cofactor.

It localises to the membrane. In terms of biological role, probable metallophosphoesterase which may participate in recombinational repair of double -strand breaks. This chain is Cell division control protein 1 (CDC1), found in Saccharomyces cerevisiae (strain ATCC 204508 / S288c) (Baker's yeast).